The primary structure comprises 330 residues: Phenylalanine--tRNA ligase alpha subunit (330 aa).

E257 contacts Mg(2+).

This sequence belongs to the class-II aminoacyl-tRNA synthetase family. Phe-tRNA synthetase alpha subunit type 1 subfamily. As to quaternary structure, tetramer of two alpha and two beta subunits. Mg(2+) is required as a cofactor.

Its subcellular location is the cytoplasm. The enzyme catalyses tRNA(Phe) + L-phenylalanine + ATP = L-phenylalanyl-tRNA(Phe) + AMP + diphosphate + H(+). The chain is Phenylalanine--tRNA ligase alpha subunit from Nostoc sp. (strain PCC 7120 / SAG 25.82 / UTEX 2576).